A 188-amino-acid polypeptide reads, in one-letter code: Elongation factor P (188 aa).

The protein belongs to the elongation factor P family.

Its subcellular location is the cytoplasm. It participates in protein biosynthesis; polypeptide chain elongation. Its function is as follows. Involved in peptide bond synthesis. Stimulates efficient translation and peptide-bond synthesis on native or reconstituted 70S ribosomes in vitro. Probably functions indirectly by altering the affinity of the ribosome for aminoacyl-tRNA, thus increasing their reactivity as acceptors for peptidyl transferase. This is Elongation factor P from Christiangramia forsetii (strain DSM 17595 / CGMCC 1.15422 / KT0803) (Gramella forsetii).